A 295-amino-acid chain; its full sequence is 4-hydroxy-tetrahydrodipicolinate synthase (295 aa).

Threonine 48 is a pyruvate binding site. Tyrosine 136 serves as the catalytic Proton donor/acceptor. The active-site Schiff-base intermediate with substrate is lysine 164. Position 206 (isoleucine 206) interacts with pyruvate.

This sequence belongs to the DapA family. As to quaternary structure, homotetramer; dimer of dimers.

The protein resides in the cytoplasm. It carries out the reaction L-aspartate 4-semialdehyde + pyruvate = (2S,4S)-4-hydroxy-2,3,4,5-tetrahydrodipicolinate + H2O + H(+). Its pathway is amino-acid biosynthesis; L-lysine biosynthesis via DAP pathway; (S)-tetrahydrodipicolinate from L-aspartate: step 3/4. Its function is as follows. Catalyzes the condensation of (S)-aspartate-beta-semialdehyde [(S)-ASA] and pyruvate to 4-hydroxy-tetrahydrodipicolinate (HTPA). This Actinobacillus pleuropneumoniae serotype 7 (strain AP76) protein is 4-hydroxy-tetrahydrodipicolinate synthase.